An 811-amino-acid chain; its full sequence is Ribosome biogenesis protein ERB1 (811 aa).

Residues 1-11 (MARNSKATDTP) are compositionally biased toward polar residues. The segment at 1 to 138 (MARNSKATDT…VHTKFSDGRP (138 aa)) is disordered. Over residues 27–96 (EDAEESSSDE…LSDVDSEEFS (70 aa)) the composition is skewed to acidic residues. Positions 104 to 121 (ASITDKLSGTKIRSYSNA) are enriched in polar residues. Over residues 128–138 (EVHTKFSDGRP) the composition is skewed to basic and acidic residues. A required for interaction with NOP7 region spans residues 270-386 (RFVPSKHEAK…LRKVPGYQEG (117 aa)). Positions 386–422 (GLRERFERCLDLYLAPRTRHNKLNIDPDSLIPELPSP) are required for interaction with YTM1. WD repeat units follow at residues 438-477 (GHTE…QVYK) and 485-525 (NTDD…FDIE). The disordered stretch occupies residues 547–566 (TKNSNIKVNSDDEDEEVEKA). WD repeat units follow at residues 595–637 (QCRK…SQSP), 640–678 (KSKG…LVKK), 681–720 (PGAR…TPYK), 724–764 (YHDK…DLMT), and 780–811 (INSL…LWTT).

It belongs to the WD repeat BOP1/ERB1 family. As to quaternary structure, component of the NOP7 complex, composed of ERB1, NOP7 and YTM1. The complex is held together by ERB1, which interacts with NOP7 via its N-terminal domain and with YTM1 via a high-affinity interaction between the seven-bladed beta-propeller domains of the 2 proteins. The NOP7 complex associates with the 66S pre-ribosome.

Its subcellular location is the nucleus. The protein resides in the nucleolus. The protein localises to the nucleoplasm. In terms of biological role, component of the NOP7 complex, which is required for maturation of the 25S and 5.8S ribosomal RNAs and formation of the 60S ribosome. The protein is Ribosome biogenesis protein ERB1 of Debaryomyces hansenii (strain ATCC 36239 / CBS 767 / BCRC 21394 / JCM 1990 / NBRC 0083 / IGC 2968) (Yeast).